The chain runs to 193 residues: Ion-translocating oxidoreductase complex subunit A (193 aa).

A run of 6 helical transmembrane segments spans residues 5–25, 39–59, 63–83, 102–122, 134–154, and 171–191; these read LLLFVGTVLVNNFVLVKFLGL, MGMGLATTFVMTLASICAWLI, ILIPLNLIYLRTLAFILVIAV, LLGIFLPLITTNCAVLGVALL, ALYGFSAAVGFSLVMVLFAAI, and AIALITAGLMSLAFMGFSGLV.

Belongs to the NqrDE/RnfAE family. In terms of assembly, the complex is composed of six subunits: RsxA, RsxB, RsxC, RsxD, RsxE and RsxG.

The protein localises to the cell inner membrane. In terms of biological role, part of a membrane-bound complex that couples electron transfer with translocation of ions across the membrane. Required to maintain the reduced state of SoxR. This Escherichia fergusonii (strain ATCC 35469 / DSM 13698 / CCUG 18766 / IAM 14443 / JCM 21226 / LMG 7866 / NBRC 102419 / NCTC 12128 / CDC 0568-73) protein is Ion-translocating oxidoreductase complex subunit A.